The primary structure comprises 339 residues: Ketol-acid reductoisomerase (NADP(+)) (339 aa).

The region spanning 1–182 (MRVYYDRDAD…GGGRSGIIET (182 aa)) is the KARI N-terminal Rossmann domain. NADP(+) is bound by residues 24–27 (YGSQ), R48, S51, T53, and 83–86 (DELQ). The active site involves H108. Residue G134 participates in NADP(+) binding. Positions 183-328 (SFREECETDL…EKLRAMMPWI (146 aa)) constitute a KARI C-terminal knotted domain. The Mg(2+) site is built by D191, E195, E227, and E231. S252 contributes to the substrate binding site.

It belongs to the ketol-acid reductoisomerase family. Requires Mg(2+) as cofactor.

The catalysed reaction is (2R)-2,3-dihydroxy-3-methylbutanoate + NADP(+) = (2S)-2-acetolactate + NADPH + H(+). It catalyses the reaction (2R,3R)-2,3-dihydroxy-3-methylpentanoate + NADP(+) = (S)-2-ethyl-2-hydroxy-3-oxobutanoate + NADPH + H(+). Its pathway is amino-acid biosynthesis; L-isoleucine biosynthesis; L-isoleucine from 2-oxobutanoate: step 2/4. The protein operates within amino-acid biosynthesis; L-valine biosynthesis; L-valine from pyruvate: step 2/4. In terms of biological role, involved in the biosynthesis of branched-chain amino acids (BCAA). Catalyzes an alkyl-migration followed by a ketol-acid reduction of (S)-2-acetolactate (S2AL) to yield (R)-2,3-dihydroxy-isovalerate. In the isomerase reaction, S2AL is rearranged via a Mg-dependent methyl migration to produce 3-hydroxy-3-methyl-2-ketobutyrate (HMKB). In the reductase reaction, this 2-ketoacid undergoes a metal-dependent reduction by NADPH to yield (R)-2,3-dihydroxy-isovalerate. The chain is Ketol-acid reductoisomerase (NADP(+)) from Paramagnetospirillum magneticum (strain ATCC 700264 / AMB-1) (Magnetospirillum magneticum).